The primary structure comprises 61 residues: Early 3 Conserved Region 1-alpha protein (61 aa).

Residues 1–14 (MSNSSNSTSLSNFS) lie on the Lumenal side of the membrane. 3 N-linked (GlcNAc...) asparagine; by host glycosylation sites follow: N3, N6, and N12. The chain crosses the membrane as a helical span at residues 15–35 (GIGVGVILTLVILFILILALL). Residues 36 to 61 (CLRVAACCTHVCTYCQLFKRWGQHPR) are Cytoplasmic-facing.

It belongs to the adenoviridae E3-CR1 family. In terms of assembly, interacts with E3 RID alpha and E3 RID beta. Only 1 of 3 three potential glycosylation sites is glycosylated. Oligosaccharides are not processed from high mannose to the complex type because the protein is retained in the endoplasmic reticulum.

It localises to the host endoplasmic reticulum membrane. Its subcellular location is the host cell membrane. Its function is as follows. Prevents infected cell apoptosis induced by the host immune system. May act by down-regulating host TRAIL receptors. May act in complex with E3 RID alpha and beta. May play a role on cellular apoptosis regulation in the ER. In Human adenovirus C serotype 2 (HAdV-2), this protein is Early 3 Conserved Region 1-alpha protein.